The sequence spans 70 residues: U2-agatoxin-Ao1j (70 aa).

The signal sequence occupies residues 1 to 20; the sequence is MRAIISLLLISAMVFSMIAA. A propeptide spanning residues 21–34 is cleaved from the precursor; sequence VPEEEGLQLSEDER. Disulfide bonds link cysteine 37–cysteine 53, cysteine 44–cysteine 58, and cysteine 52–cysteine 68. Leucine 69 carries the leucine amide modification.

Belongs to the neurotoxin 01 (U2-agtx) family. In terms of tissue distribution, expressed by the venom gland.

The protein localises to the secreted. Functionally, insect active toxin causing rapid but reversible paralysis in crickets. No activity shown in mammals. Does not show effect on mammalian voltage-gated calcium channels. The protein is U2-agatoxin-Ao1j of Agelena orientalis (Funnel-web spider).